Consider the following 271-residue polypeptide: Dermonecrotic toxin LhSicTox-alphaIA2aiv (271 aa).

His3 is an active-site residue. Residues Glu23 and Asp25 each contribute to the Mg(2+) site. The Nucleophile role is filled by His39. 2 disulfide bridges follow: Cys43/Cys49 and Cys45/Cys188. Position 83 (Asp83) interacts with Mg(2+).

Belongs to the arthropod phospholipase D family. Class II subfamily. The cofactor is Mg(2+). As to expression, expressed by the venom gland.

Its subcellular location is the secreted. The catalysed reaction is an N-(acyl)-sphingosylphosphocholine = an N-(acyl)-sphingosyl-1,3-cyclic phosphate + choline. The enzyme catalyses an N-(acyl)-sphingosylphosphoethanolamine = an N-(acyl)-sphingosyl-1,3-cyclic phosphate + ethanolamine. It catalyses the reaction a 1-acyl-sn-glycero-3-phosphocholine = a 1-acyl-sn-glycero-2,3-cyclic phosphate + choline. It carries out the reaction a 1-acyl-sn-glycero-3-phosphoethanolamine = a 1-acyl-sn-glycero-2,3-cyclic phosphate + ethanolamine. In terms of biological role, dermonecrotic toxins cleave the phosphodiester linkage between the phosphate and headgroup of certain phospholipids (sphingolipid and lysolipid substrates), forming an alcohol (often choline) and a cyclic phosphate. This toxin acts on sphingomyelin (SM). It may also act on ceramide phosphoethanolamine (CPE), lysophosphatidylcholine (LPC) and lysophosphatidylethanolamine (LPE), but not on lysophosphatidylserine (LPS), and lysophosphatidylglycerol (LPG). It acts by transphosphatidylation, releasing exclusively cyclic phosphate products as second products. Induces dermonecrosis, hemolysis, increased vascular permeability, edema, inflammatory response, and platelet aggregation. The chain is Dermonecrotic toxin LhSicTox-alphaIA2aiv from Loxosceles hirsuta (Recluse spider).